A 278-amino-acid chain; its full sequence is Phosphonates import ATP-binding protein PhnC 2 (278 aa).

Positions 5–253 constitute an ABC transporter domain; it reads IRVDSLNKTF…FLNELYGAEG (249 aa). 37–44 contributes to the ATP binding site; the sequence is GASGSGKS.

It belongs to the ABC transporter superfamily. Phosphonates importer (TC 3.A.1.9.1) family. In terms of assembly, the complex is composed of two ATP-binding proteins (PhnC), two transmembrane proteins (PhnE) and a solute-binding protein (PhnD).

Its subcellular location is the cell inner membrane. The catalysed reaction is phosphonate(out) + ATP + H2O = phosphonate(in) + ADP + phosphate + H(+). Functionally, part of the ABC transporter complex PhnCDE involved in phosphonates import. Responsible for energy coupling to the transport system. In Pseudomonas aeruginosa (strain ATCC 15692 / DSM 22644 / CIP 104116 / JCM 14847 / LMG 12228 / 1C / PRS 101 / PAO1), this protein is Phosphonates import ATP-binding protein PhnC 2.